A 613-amino-acid chain; its full sequence is Transcription factor Sp2 (613 aa).

Positions 1-32 (MSDPQTSMAATAAVSPSDYLQPAASTTQDSQP) are disordered. Over residues 23–32 (AASTTQDSQP) the composition is skewed to polar residues. Serine 78 is modified (phosphoserine). Disordered stretches follow at residues 170 to 197 (SPSSHKPVPIKPAPVQKSSTTTTPAQSG) and 225 to 255 (PGAATQLLTESPPAPLSKTNKKARKKSLPAA). Positions 185–197 (QKSSTTTTPAQSG) are enriched in polar residues. Residues 361-369 (GEVQTVLVQ) carry the 9aaTAD; inactive motif. A compositionally biased stretch (low complexity) spans 374-392 (ATAATASTTTCSSPASRAA). The interval 374–402 (ATAATASTTTCSSPASRAAHLSGTSKKHS) is disordered. C2H2-type zinc fingers lie at residues 525 to 549 (HVCHIPDCGKTFRKTSLLRAHVRLH), 555 to 579 (FVCNWFFCGKRFTRSDELQRHARTH), and 585 to 607 (FECAQCQKRFMRSDHLTKHYKTH).

This sequence belongs to the Sp1 C2H2-type zinc-finger protein family.

The protein resides in the nucleus. Its function is as follows. Binds to GC box promoters elements and selectively activates mRNA synthesis from genes that contain functional recognition sites. The protein is Transcription factor Sp2 (SP2) of Bos taurus (Bovine).